Reading from the N-terminus, the 223-residue chain is MTQDELKQAVAKAAMAYIQPMLEADTIVGVGTGSTANLFIDELAKHKGLFDGTVASSEASAERLKKHGIPVYDLNSVDSIRVYVDGADESNDNLHLIKGGGAALTREKIVAACSDEFVCIADESKLVKVLGDFPLPVEIIPMARGHVARELVKLGGDPVYREGVVTDNGNHILDVYNLEILDPIALEKSIDGIVGVVTNGLFAKRSADVLLLATKEGIKTLKK.

Substrate is bound by residues 32–35, 85–88, and 98–101; these read TGST, DGAD, and KGGG. Glu-107 (proton acceptor) is an active-site residue. Lys-125 contacts substrate.

It belongs to the ribose 5-phosphate isomerase family. Homodimer.

The catalysed reaction is aldehydo-D-ribose 5-phosphate = D-ribulose 5-phosphate. Its pathway is carbohydrate degradation; pentose phosphate pathway; D-ribose 5-phosphate from D-ribulose 5-phosphate (non-oxidative stage): step 1/1. Functionally, catalyzes the reversible conversion of ribose-5-phosphate to ribulose 5-phosphate. The chain is Ribose-5-phosphate isomerase A from Marinomonas sp. (strain MWYL1).